Here is a 200-residue protein sequence, read N- to C-terminus: Imidazoleglycerol-phosphate dehydratase (200 aa).

This sequence belongs to the imidazoleglycerol-phosphate dehydratase family.

It is found in the cytoplasm. The enzyme catalyses D-erythro-1-(imidazol-4-yl)glycerol 3-phosphate = 3-(imidazol-4-yl)-2-oxopropyl phosphate + H2O. It functions in the pathway amino-acid biosynthesis; L-histidine biosynthesis; L-histidine from 5-phospho-alpha-D-ribose 1-diphosphate: step 6/9. This Chlorobium phaeovibrioides (strain DSM 265 / 1930) (Prosthecochloris vibrioformis (strain DSM 265)) protein is Imidazoleglycerol-phosphate dehydratase.